The following is a 300-amino-acid chain: GTP cyclohydrolase FolE2 (300 aa).

Belongs to the GTP cyclohydrolase IV family.

It carries out the reaction GTP + H2O = 7,8-dihydroneopterin 3'-triphosphate + formate + H(+). It participates in cofactor biosynthesis; 7,8-dihydroneopterin triphosphate biosynthesis; 7,8-dihydroneopterin triphosphate from GTP: step 1/1. Functionally, converts GTP to 7,8-dihydroneopterin triphosphate. This is GTP cyclohydrolase FolE2 from Bacillus licheniformis (strain ATCC 14580 / DSM 13 / JCM 2505 / CCUG 7422 / NBRC 12200 / NCIMB 9375 / NCTC 10341 / NRRL NRS-1264 / Gibson 46).